Reading from the N-terminus, the 418-residue chain is Serine hydroxymethyltransferase (418 aa).

(6S)-5,6,7,8-tetrahydrofolate contacts are provided by residues leucine 121 and 125-127 (GHL). Lysine 230 is modified (N6-(pyridoxal phosphate)lysine). 355-357 (SPF) is a (6S)-5,6,7,8-tetrahydrofolate binding site.

Belongs to the SHMT family. Homodimer. The cofactor is pyridoxal 5'-phosphate.

It is found in the cytoplasm. It carries out the reaction (6R)-5,10-methylene-5,6,7,8-tetrahydrofolate + glycine + H2O = (6S)-5,6,7,8-tetrahydrofolate + L-serine. Its pathway is one-carbon metabolism; tetrahydrofolate interconversion. It participates in amino-acid biosynthesis; glycine biosynthesis; glycine from L-serine: step 1/1. In terms of biological role, catalyzes the reversible interconversion of serine and glycine with tetrahydrofolate (THF) serving as the one-carbon carrier. This reaction serves as the major source of one-carbon groups required for the biosynthesis of purines, thymidylate, methionine, and other important biomolecules. Also exhibits THF-independent aldolase activity toward beta-hydroxyamino acids, producing glycine and aldehydes, via a retro-aldol mechanism. The protein is Serine hydroxymethyltransferase of Alcanivorax borkumensis (strain ATCC 700651 / DSM 11573 / NCIMB 13689 / SK2).